The following is a 130-amino-acid chain: Protein ApaG (130 aa).

The ApaG domain maps to 3-127 (STITRDIQIT…FSLDSPFSRQ (125 aa)).

This is Protein ApaG from Beijerinckia indica subsp. indica (strain ATCC 9039 / DSM 1715 / NCIMB 8712).